A 283-amino-acid polypeptide reads, in one-letter code: Putative S-adenosyl-L-methionine-dependent methyltransferase SAV_474/SAV474 (283 aa).

S-adenosyl-L-methionine-binding positions include Asp121 and 150 to 151; that span reads DL. The tract at residues 258 to 283 is disordered; it reads AAYGRPISTPPQREERPGGLISAVRR.

It belongs to the UPF0677 family.

In terms of biological role, exhibits S-adenosyl-L-methionine-dependent methyltransferase activity. The protein is Putative S-adenosyl-L-methionine-dependent methyltransferase SAV_474/SAV474 of Streptomyces avermitilis (strain ATCC 31267 / DSM 46492 / JCM 5070 / NBRC 14893 / NCIMB 12804 / NRRL 8165 / MA-4680).